Consider the following 46-residue polypeptide: Endochitinase 1A (46 aa).

It belongs to the glycosyl hydrolase 19 family. Chitinase class I subfamily.

The catalysed reaction is Random endo-hydrolysis of N-acetyl-beta-D-glucosaminide (1-&gt;4)-beta-linkages in chitin and chitodextrins.. Its function is as follows. Defense against chitin-containing fungal and bacterial pathogens. The polypeptide is Endochitinase 1A (Arachis hypogaea (Peanut)).